Here is a 146-residue protein sequence, read N- to C-terminus: 3-dehydroquinate dehydratase (146 aa).

Catalysis depends on Tyr22, which acts as the Proton acceptor. Asn73, His79, and Asp86 together coordinate substrate. The active-site Proton donor is His99. Substrate contacts are provided by residues Val100–Ser101 and Arg110.

Belongs to the type-II 3-dehydroquinase family. In terms of assembly, homododecamer.

It catalyses the reaction 3-dehydroquinate = 3-dehydroshikimate + H2O. Its pathway is metabolic intermediate biosynthesis; chorismate biosynthesis; chorismate from D-erythrose 4-phosphate and phosphoenolpyruvate: step 3/7. Its function is as follows. Catalyzes a trans-dehydration via an enolate intermediate. The protein is 3-dehydroquinate dehydratase of Kineococcus radiotolerans (strain ATCC BAA-149 / DSM 14245 / SRS30216).